The chain runs to 921 residues: Leucine--tRNA ligase (921 aa).

The short motif at 80 to 90 (PYPSGKLHMGH) is the 'HIGH' region element. A 'KMSKS' region motif is present at residues 667–671 (KMSKS). Position 670 (K670) interacts with ATP.

Belongs to the class-I aminoacyl-tRNA synthetase family.

It is found in the cytoplasm. The catalysed reaction is tRNA(Leu) + L-leucine + ATP = L-leucyl-tRNA(Leu) + AMP + diphosphate. This Psychrobacter arcticus (strain DSM 17307 / VKM B-2377 / 273-4) protein is Leucine--tRNA ligase.